The sequence spans 172 residues: MKLGIVIFPSKMIQDKANGLRKRYDPHYALVPPHITLKTPFETQDEQLESIVNELHTIASKTNPFTLHVGKVGSFAPVNNVIYFKVEKTPELTFLNEEMHNGFFTQEREYAFVPHLTIGQGLSDAEHADVLGRLRMKDFYYEQPIDRFHLLYQLENGTWTVHETFRLGKGNN.

His-34 (proton donor) is an active-site residue. 2 consecutive short sequence motifs (HXTX) follow at residues His-34–Leu-37 and His-115–Ile-118. His-115 (proton acceptor) is an active-site residue.

This sequence belongs to the 2H phosphoesterase superfamily. YjcG family.

This chain is Putative phosphoesterase BCAH820_1309, found in Bacillus cereus (strain AH820).